A 255-amino-acid chain; its full sequence is Proteasome subunit alpha type-3 (255 aa).

N-acetylserine is present on S2. K57, K206, and K230 each carry N6-acetyllysine. A phosphoserine mark is found at S243 and S250.

The protein belongs to the peptidase T1A family. The 26S proteasome consists of a 20S proteasome core and two 19S regulatory subunits. The 20S proteasome core is a barrel-shaped complex made of 28 subunits that are arranged in four stacked rings. The two outer rings are each formed by seven alpha subunits, and the two inner rings are formed by seven beta subunits. The proteolytic activity is exerted by three beta-subunits PSMB5, PSMB6 and PSMB7. Interacts with AURKB. Interacts with CDKN1A. Interacts with MDM2 and RB1. Interacts with the C-terminus of TBXA2R isoform 2. Interacts with DNAJB2. In terms of assembly, (Microbial infection) Interacts with HIV-1 Tat protein. As to quaternary structure, (Microbial infection) Interacts with hepatitis C virus (HCV) F protein. (Microbial infection) Interacts with Epstein-Barr virus EBNA3 proteins.

The protein resides in the cytoplasm. It is found in the nucleus. Its function is as follows. Component of the 20S core proteasome complex involved in the proteolytic degradation of most intracellular proteins. This complex plays numerous essential roles within the cell by associating with different regulatory particles. Associated with two 19S regulatory particles, forms the 26S proteasome and thus participates in the ATP-dependent degradation of ubiquitinated proteins. The 26S proteasome plays a key role in the maintenance of protein homeostasis by removing misfolded or damaged proteins that could impair cellular functions, and by removing proteins whose functions are no longer required. Associated with the PA200 or PA28, the 20S proteasome mediates ubiquitin-independent protein degradation. This type of proteolysis is required in several pathways including spermatogenesis (20S-PA200 complex) or generation of a subset of MHC class I-presented antigenic peptides (20S-PA28 complex). Binds to the C-terminus of CDKN1A and thereby mediates its degradation. Negatively regulates the membrane trafficking of the cell-surface thromboxane A2 receptor (TBXA2R) isoform 2. This is Proteasome subunit alpha type-3 from Homo sapiens (Human).